A 736-amino-acid polypeptide reads, in one-letter code: Protein kinase C epsilon type (736 aa).

In terms of domain architecture, C2 spans 1-117; the sequence is MVVFNGLLKI…NGSRHFEDWI (117 aa). The residue at position 62 (Ser62) is a Phosphoserine. The Phorbol-ester/DAG-type 1 zinc finger occupies 169–220; it reads GHKFMATYLRQPTYCSHCRDFIWGVIGKQGYQCQVCTCVVHKRCHELIITKV. Thr228 is subject to Phosphothreonine. The residue at position 234 (Ser234) is a Phosphoserine. The segment at 242 to 292 adopts a Phorbol-ester/DAG-type 2 zinc-finger fold; it reads PHKFGIHNYKVPTFCDHCGSLLWGLLRQGLQCKVCKMNVHRRCETNVAPNC. The residue at position 309 (Thr309) is a Phosphothreonine. A disordered region spans residues 310-356; the sequence is PDKITNSGQRRKKLIGGAESPQPTSGSSPSEEDRSKSAPTSPCDQEL. Residues Ser316, Ser329, and Ser337 each carry the phosphoserine modification. A Phosphoserine; by GSK3-beta modification is found at Ser346. Thr349 carries the post-translational modification Phosphothreonine. Position 350 is a phosphoserine; by MAPK11 and MAPK14 (Ser350). A Phosphoserine; by autocatalysis modification is found at Ser368. Residues 369–397 are disordered; the sequence is FDNRGEEHRAASSTDGQLGSPENGEVRQG. At Ser388 the chain carries Phosphoserine. The Protein kinase domain occupies 407 to 667; the sequence is FNFIKVLGKG…EDAIKQHPFF (261 aa). ATP-binding positions include 413-421 and Lys436; that span reads LGKGSFGKV. The Proton acceptor role is filled by Asp531. A Phosphothreonine; by PDPK1 modification is found at Thr565. The region spanning 668–736 is the AGC-kinase C-terminal domain; the sequence is KEIDWVLLEQ…FSYFGEDLMP (69 aa). A Phosphothreonine modification is found at Thr702. The residue at position 709 (Thr709) is a Phosphothreonine; by autocatalysis. A Phosphoserine; by autocatalysis modification is found at Ser728.

This sequence belongs to the protein kinase superfamily. AGC Ser/Thr protein kinase family. PKC subfamily. Forms a ternary complex with TRIM63 and RACK1/GN2BL1. Can form a complex with PDLIM5 and N-type calcium channel. Interacts with COPB1. Interacts with DGKQ. Interacts with STAT3. Interacts with YWHAB. Interacts with HSP90AB1; promotes functional activation in a heat shock-dependent manner. Interacts (via phorbol-ester/DAG-type 2 domain) with PRPH and VIM. Interacts with NLRP5/MATER. Phosphorylation on Thr-565 by PDPK1 triggers autophosphorylation on Ser-728. Phosphorylation in the hinge domain at Ser-350 by MAPK11 or MAPK14, Ser-346 by GSK3B and Ser-368 by autophosphorylation is required for interaction with YWHAB. In response to growth factors, phosphorylated at Thr-702 and Ser-728 by the mTORC2 complex, promoting autophosphorylation and activation of PRKCE.

The protein localises to the cytoplasm. It localises to the cytoskeleton. Its subcellular location is the cell membrane. It is found in the perinuclear region. The protein resides in the nucleus. It catalyses the reaction L-seryl-[protein] + ATP = O-phospho-L-seryl-[protein] + ADP + H(+). It carries out the reaction L-threonyl-[protein] + ATP = O-phospho-L-threonyl-[protein] + ADP + H(+). Novel PKCs (PRKCD, PRKCE, PRKCH and PRKCQ) are calcium-insensitive, but activated by diacylglycerol (DAG) and phosphatidylserine. Three specific sites; Thr-565 (activation loop of the kinase domain), Thr-709 (turn motif) and Ser-728 (hydrophobic region), need to be phosphorylated for its full activation. In terms of biological role, calcium-independent, phospholipid- and diacylglycerol (DAG)-dependent serine/threonine-protein kinase that plays essential roles in the regulation of multiple cellular processes linked to cytoskeletal proteins, such as cell adhesion, motility, migration and cell cycle, functions in neuron growth and ion channel regulation, and is involved in immune response, cancer cell invasion and regulation of apoptosis. Mediates cell adhesion to the extracellular matrix via integrin-dependent signaling, by mediating angiotensin-2-induced activation of integrin beta-1 (ITGB1) in cardiac fibroblasts. Phosphorylates MARCKS, which phosphorylates and activates PTK2/FAK, leading to the spread of cardiomyocytes. Involved in the control of the directional transport of ITGB1 in mesenchymal cells by phosphorylating vimentin (VIM), an intermediate filament (IF) protein. In epithelial cells, associates with and phosphorylates keratin-8 (KRT8), which induces targeting of desmoplakin at desmosomes and regulates cell-cell contact. Phosphorylates IQGAP1, which binds to CDC42, mediating epithelial cell-cell detachment prior to migration. During cytokinesis, forms a complex with YWHAB, which is crucial for daughter cell separation, and facilitates abscission by a mechanism which may implicate the regulation of RHOA. In cardiac myocytes, regulates myofilament function and excitation coupling at the Z-lines, where it is indirectly associated with F-actin via interaction with COPB1. During endothelin-induced cardiomyocyte hypertrophy, mediates activation of PTK2/FAK, which is critical for cardiomyocyte survival and regulation of sarcomere length. Plays a role in the pathogenesis of dilated cardiomyopathy via persistent phosphorylation of troponin I (TNNI3). Involved in nerve growth factor (NFG)-induced neurite outgrowth and neuron morphological change independently of its kinase activity, by inhibition of RHOA pathway, activation of CDC42 and cytoskeletal rearrangement. May be involved in presynaptic facilitation by mediating phorbol ester-induced synaptic potentiation. Phosphorylates gamma-aminobutyric acid receptor subunit gamma-2 (GABRG2), which reduces the response of GABA receptors to ethanol and benzodiazepines and may mediate acute tolerance to the intoxicating effects of ethanol. Upon PMA treatment, phosphorylates the capsaicin- and heat-activated cation channel TRPV1, which is required for bradykinin-induced sensitization of the heat response in nociceptive neurons. Is able to form a complex with PDLIM5 and N-type calcium channel, and may enhance channel activities and potentiates fast synaptic transmission by phosphorylating the pore-forming alpha subunit CACNA1B (CaV2.2). Downstream of TLR4, plays an important role in the lipopolysaccharide (LPS)-induced immune response by phosphorylating and activating TICAM2/TRAM, which in turn activates the transcription factor IRF3 and subsequent cytokines production. In differentiating erythroid progenitors, is regulated by EPO and controls the protection against the TNFSF10/TRAIL-mediated apoptosis, via BCL2. May be involved in the regulation of the insulin-induced phosphorylation and activation of AKT1. Phosphorylates NLRP5/MATER and may thereby modulate AKT pathway activation in cumulus cells. Phosphorylates and activates LRRK1, which phosphorylates RAB proteins involved in intracellular trafficking. This Oryctolagus cuniculus (Rabbit) protein is Protein kinase C epsilon type (PRKCE).